A 166-amino-acid polypeptide reads, in one-letter code: MDEYKSKLPRIPISKCKKIARTDPEYILTSQAAFAATAFTTELFIQMLAEETCSLAQIHKQTKTLRLNYEDLSTAIRNLDKFQFLSDVVPQTENLASLVRENKVRYTIVNPSPEIDIESEDEVDEANEPEVGEPEVDEAEVEAEVEAEAAEPETHTLDEPRPESSS.

The segment at 112–166 (SPEIDIESEDEVDEANEPEVGEPEVDEAEVEAEVEAEAAEPETHTLDEPRPESSS) is disordered. Positions 115–151 (IDIESEDEVDEANEPEVGEPEVDEAEVEAEVEAEAAE) are enriched in acidic residues. The segment covering 152 to 166 (PETHTLDEPRPESSS) has biased composition (basic and acidic residues).

In terms of assembly, heterotetramer. Consists of four subunits: POL2, DPB2, DPB3 and DPB4.

Its subcellular location is the nucleus. Functionally, as accessory component of the DNA polymerase epsilon (DNA polymerase II) participates in chromosomal DNA replication. In Kluyveromyces lactis (strain ATCC 8585 / CBS 2359 / DSM 70799 / NBRC 1267 / NRRL Y-1140 / WM37) (Yeast), this protein is DNA polymerase epsilon subunit C (DPB3).